A 512-amino-acid chain; its full sequence is Amidase 2 (512 aa).

Residues Lys-122 and Ser-197 each act as charge relay system in the active site. Substrate is bound by residues Ser-197 and 218–221; that span reads IGGS. The Acyl-ester intermediate role is filled by Ser-221.

Belongs to the amidase family.

The enzyme catalyses a monocarboxylic acid amide + H2O = a monocarboxylate + NH4(+). It functions in the pathway xenobiotic degradation. Its function is as follows. Amidase; part of the Fusarium detoxification of benzoxazolinone cluster 2 (FDB2) involved in the degradation of benzoxazolinones produced by the host plant. Maize, wheat, and rye produce the 2 benzoxazinone phytoanticipins 2,4-dihy-droxy-7-methoxy-1,4-benzoxazin-3-one (DIMBOA) and 2,4-dihydroxy-1,4-benzoxazin-3-one (DIBOA) that, due to their inherent instability once released, spontaneously degrade to the more stable corresponding benzoxazolinones, 6-methoxy-2-benzoxazolinone (MBOA) and 2-benzoxazolinone (BOA), respectively. The first step in the detoxification of benzoxazolinones involves the hydrolysis of the cyclic ester bond of benzoxazolinones by the FDB1 cluster gamma-lactamase MBL1 to aminophenols. MBL1 is able to convert BOA into 2-aminophenol (2-AP), as well as MBOA into 5-methoxy-2-aminophenol (2-AMP). The FDB2 cluster N-malonyltransferase FDB2/NAT1 then metabolizes aminophenols via N-malonylation to non-toxic malonamic acids. FDB2/NAT1 converts 2-AP into N-(2-hydroxyphenyl) malonamic acid (HPMA) and 2-AMP into N-(2-hydroxy-4-methoxyphenyl) malonamic acid (HMPMA). The duplicated dienlactone hydrolases DLH1 and DLH2 may provide redundant function for hydrolyzing the lactone moiety in the BOA molecule. The roles of the amidases an other enzymes encoded by the 2 FDB clusters have not been identified so far. The polypeptide is Amidase 2 (Gibberella moniliformis (strain M3125 / FGSC 7600) (Maize ear and stalk rot fungus)).